Reading from the N-terminus, the 461-residue chain is MVRSEWIAARKGHDNVTQMHYARQGIITEEMHYVAQRENLPPELIRDEVARGRMIIPANINHPNLEPMAIGIAAKCKVNANIGASPNSSNLEEELAKLRLAVKYGADTVMDLSTGGGDLDAIRTAIINASPVPIGTVPVYQALESVHGSVERLTPDDFLHVIEKHAQQGVDYMTIHAGLLIEYLPLVKNRITGIVSRGGGILAKWMLYHHKQNPLYTHFRDIIEIFKKYDVSFSLGDSLRPGCLHDASDEAQLAELKTLGQLTRKAWEHDVQVMVEGPGHVPMDQIEFNVRKQMEECSEAPFYVLGPLVTDIAPGYDHITSAIGAALAGWYGTAMLCYVTPKEHLGLPNAEDVRNGLIAYKIAAHAADIARHRPGARDRDDELSRARYNFDWNRQFELALDPERAREYHDETLPADIYKTAEFCSMCGPKFCPMQTKVDAEALAELEKFLAKDKDQVSASA.

Residues asparagine 81, methionine 110, tyrosine 140, histidine 176, 196–198, 237–240, and glutamate 276 each bind substrate; these read SRG and DSLR. Histidine 280 serves as a coordination point for Zn(2+). Tyrosine 303 is a substrate binding site. Residue histidine 344 participates in Zn(2+) binding. [4Fe-4S] cluster is bound by residues cysteine 424, cysteine 427, and cysteine 432.

It belongs to the ThiC family. [4Fe-4S] cluster is required as a cofactor.

The enzyme catalyses 5-amino-1-(5-phospho-beta-D-ribosyl)imidazole + S-adenosyl-L-methionine = 4-amino-2-methyl-5-(phosphooxymethyl)pyrimidine + CO + 5'-deoxyadenosine + formate + L-methionine + 3 H(+). Its pathway is cofactor biosynthesis; thiamine diphosphate biosynthesis. In terms of biological role, catalyzes the synthesis of the hydroxymethylpyrimidine phosphate (HMP-P) moiety of thiamine from aminoimidazole ribotide (AIR) in a radical S-adenosyl-L-methionine (SAM)-dependent reaction. This is Phosphomethylpyrimidine synthase from Thermosynechococcus vestitus (strain NIES-2133 / IAM M-273 / BP-1).